A 618-amino-acid chain; its full sequence is Methionine--tRNA ligase (618 aa).

Residues 12-22 carry the 'HIGH' region motif; the sequence is YYVNAEPHLGH. Residues cysteine 127, cysteine 130, cysteine 144, and histidine 147 each contribute to the Zn(2+) site. The 'KMSKS' region motif lies at 297 to 301; the sequence is KMSKT. Residue lysine 300 participates in ATP binding. A tRNA-binding domain is found at 518 to 618; the sequence is DFAKVELRVA…GEVPPGAVVK (101 aa).

The protein belongs to the class-I aminoacyl-tRNA synthetase family. MetG type 2A subfamily. In terms of assembly, homodimer. Zn(2+) serves as cofactor.

It localises to the cytoplasm. The catalysed reaction is tRNA(Met) + L-methionine + ATP = L-methionyl-tRNA(Met) + AMP + diphosphate. In terms of biological role, is required not only for elongation of protein synthesis but also for the initiation of all mRNA translation through initiator tRNA(fMet) aminoacylation. The sequence is that of Methionine--tRNA ligase (metG) from Thermus thermophilus (strain ATCC 27634 / DSM 579 / HB8).